The chain runs to 356 residues: Phospho-N-acetylmuramoyl-pentapeptide-transferase (356 aa).

10 helical membrane passes run 25 to 45, 70 to 90, 93 to 113, 138 to 158, 164 to 184, 195 to 215, 235 to 255, 258 to 278, 284 to 304, and 333 to 353; these read TIAA…SIIA, GTPT…AFLW, LSNI…AIGF, FFVA…GFAL, YLIH…VATG, GLAI…AYLC, LAVL…FNAP, AIFM…TVAV, IVLV…VIQV, and QVVI…LSTL.

Belongs to the glycosyltransferase 4 family. MraY subfamily. Mg(2+) serves as cofactor.

The protein localises to the cell inner membrane. It catalyses the reaction UDP-N-acetyl-alpha-D-muramoyl-L-alanyl-gamma-D-glutamyl-meso-2,6-diaminopimeloyl-D-alanyl-D-alanine + di-trans,octa-cis-undecaprenyl phosphate = di-trans,octa-cis-undecaprenyl diphospho-N-acetyl-alpha-D-muramoyl-L-alanyl-D-glutamyl-meso-2,6-diaminopimeloyl-D-alanyl-D-alanine + UMP. Its pathway is cell wall biogenesis; peptidoglycan biosynthesis. Functionally, catalyzes the initial step of the lipid cycle reactions in the biosynthesis of the cell wall peptidoglycan: transfers peptidoglycan precursor phospho-MurNAc-pentapeptide from UDP-MurNAc-pentapeptide onto the lipid carrier undecaprenyl phosphate, yielding undecaprenyl-pyrophosphoryl-MurNAc-pentapeptide, known as lipid I. The polypeptide is Phospho-N-acetylmuramoyl-pentapeptide-transferase (Bartonella tribocorum (strain CIP 105476 / IBS 506)).